A 67-amino-acid chain; its full sequence is Small ribosomal subunit protein eS17 (67 aa).

It belongs to the eukaryotic ribosomal protein eS17 family.

The protein is Small ribosomal subunit protein eS17 of Haloquadratum walsbyi (strain DSM 16790 / HBSQ001).